The following is a 301-amino-acid chain: Homoserine kinase (301 aa).

81 to 91 (RPSSGLGSSAA) contributes to the ATP binding site.

It belongs to the GHMP kinase family. Homoserine kinase subfamily.

It is found in the cytoplasm. The enzyme catalyses L-homoserine + ATP = O-phospho-L-homoserine + ADP + H(+). Its pathway is amino-acid biosynthesis; L-threonine biosynthesis; L-threonine from L-aspartate: step 4/5. Functionally, catalyzes the ATP-dependent phosphorylation of L-homoserine to L-homoserine phosphate. This chain is Homoserine kinase, found in Halobacterium salinarum (strain ATCC 29341 / DSM 671 / R1).